We begin with the raw amino-acid sequence, 329 residues long: Type 2 lactosamine alpha-2,3-sialyltransferase (329 aa).

Over 1-4 the chain is Cytoplasmic; sequence MKGY. A helical; Signal-anchor for type II membrane protein transmembrane segment spans residues 5–25; it reads LVAIFLSSIFLYYVLYCILWG. Residues 26–329 lie on the Lumenal side of the membrane; it reads TNGYWFPAEE…IKKKMVINLT (304 aa). 4 N-linked (GlcNAc...) asparagine glycosylation sites follow: Asn-129, Asn-181, Asn-295, and Asn-308.

The protein belongs to the glycosyltransferase 29 family.

The protein resides in the golgi apparatus membrane. It carries out the reaction a neolactoside nLc4Cer(d18:1(4E)) + CMP-N-acetyl-beta-neuraminate = a neolactoside IV(3)-alpha-NeuAc-nLc4Cer(d18:1(4E)) + CMP + H(+). The catalysed reaction is a beta-D-galactosyl-(1-&gt;4)-N-acetyl-beta-D-glucosaminyl derivative + CMP-N-acetyl-beta-neuraminate = an N-acetyl-alpha-neuraminyl-(2-&gt;3)-beta-D-galactosyl-(1-&gt;4)-N-acetyl-beta-D-glucosaminyl derivative + CMP + H(+). The enzyme catalyses a neolactoside nLc6Cer(d18:1(4E)) + CMP-N-acetyl-beta-neuraminate = a neolactoside VI(3)-alpha-NeuNAc-nLc6Cer(d18:1(4E)) + CMP + H(+). Its function is as follows. Transfers the sialyl residue from CMP-N-acetyl-beta-neuraminate to the terminal galactose residue on sugar chains of glycoproteins and glycolipids. It's alpha-2,3-sialyltransferase activity is specific toward type II glycan chains (Galbeta1-4GlcNAc) on glycoproteins and glycolipids such as neolactosides nLc4Cer and nLc6Cer, whose sialyl-products serve as precursors for the Lewis X antigen. Critically involved in the synthesis of functional selectin ligands needed for neutrophil recruitment during inflammation and lymphocyte homing to the lymph nodes. The protein is Type 2 lactosamine alpha-2,3-sialyltransferase (St3gal6) of Mus musculus (Mouse).